Reading from the N-terminus, the 75-residue chain is uncharacterized protein (75 aa).

This is an uncharacterized protein from Saccharolobus islandicus (Sulfolobus islandicus).